Reading from the N-terminus, the 76-residue chain is Exodeoxyribonuclease 7 small subunit (76 aa).

This sequence belongs to the XseB family. Heterooligomer composed of large and small subunits.

It localises to the cytoplasm. It catalyses the reaction Exonucleolytic cleavage in either 5'- to 3'- or 3'- to 5'-direction to yield nucleoside 5'-phosphates.. Functionally, bidirectionally degrades single-stranded DNA into large acid-insoluble oligonucleotides, which are then degraded further into small acid-soluble oligonucleotides. The polypeptide is Exodeoxyribonuclease 7 small subunit (Methylococcus capsulatus (strain ATCC 33009 / NCIMB 11132 / Bath)).